Here is a 538-residue protein sequence, read N- to C-terminus: Beta-1,4-mannosyl-glycoprotein 4-beta-N-acetylglucosaminyltransferase (538 aa).

The Cytoplasmic segment spans residues 1–7; that stretch reads MKMRRYK. The helical; Signal-anchor for type II membrane protein transmembrane segment at 8-23 threads the bilayer; it reads LFLMFCMAGLCLISFL. Residues 24 to 538 lie on the Lumenal side of the membrane; the sequence is HFFKTLSYVT…VRGKLDTAEG (515 aa). The tract at residues 120-161 is disordered; the sequence is PGTRMLEKPSPGRTEEKTEVSEGSSARGPARRPMRHVLSSRE. N-linked (GlcNAc...) asparagine glycans are attached at residues Asn-245, Asn-263, and Asn-401. The interval 507-538 is disordered; the sequence is REPKSTVEGGRQNQGSDGRSSAVRGKLDTAEG.

The protein belongs to the glycosyltransferase 17 family. As to quaternary structure, interacts with MGAT4D. Highly expressed in brain and kidney and to a much lesser extent in stomach, heart, intestine, uterus, testis, ovary and lung. Not present in spleen, liver and muscle. In brain, expressed in neurons of hippocampus.

The protein resides in the golgi apparatus membrane. It catalyses the reaction N(4)-{beta-D-GlcNAc-(1-&gt;2)-alpha-D-Man-(1-&gt;3)-[beta-D-GlcNAc-(1-&gt;2)-alpha-D-Man-(1-&gt;6)]-beta-D-Man-(1-&gt;4)-beta-D-GlcNAc-(1-&gt;4)-beta-D-GlcNAc}-L-asparaginyl-[protein] + UDP-N-acetyl-alpha-D-glucosamine = N(4)-{beta-D-GlcNAc-(1-&gt;2)-alpha-D-Man-(1-&gt;3)-[beta-D-GlcNAc-(1-&gt;4)]-[beta-D-GlcNAc-(1-&gt;2)-alpha-D-Man-(1-&gt;6)]-beta-D-Man-(1-&gt;4)-beta-D-GlcNAc-(1-&gt;4)-beta-D-GlcNAc}-L-asparaginyl-[protein] + UDP + H(+). The protein operates within protein modification; protein glycosylation. Its function is as follows. It is involved in the regulation of the biosynthesis and biological function of glycoprotein oligosaccharides. Catalyzes the addition of N-acetylglucosamine in beta 1-4 linkage to the beta-linked mannose of the trimannosyl core of N-linked sugar chains, called bisecting N-acetylglucosamine (GlcNAc). It is one of the most important enzymes involved in the regulation of the biosynthesis of glycoprotein oligosaccharides. The addition of this bisecting GlcNAc residue alters not only the composition, but also the conformation of the N-glycan. The introduction of the bisecting GlcNAc residue results in the suppression of further processing and elongation of N-glycans, precluding the formation of beta-1,6 GlcNAc branching, catalyzed by MGAT5 since it is unable to use the bisected oligosaccharide as a substrate. Addition of bisecting N-acetylglucosamine to CDH1/E-cadherin modulates CDH1 cell membrane location. Inhibits NeuAc-alpha-2,3-Gal-beta-1,4-GlcNAc- formation which modulates sialylation levels and plays a role in cell migration regulation. In brain, addition of bisecting N-acetylglucosamine to BACE1 blocks its lysosomal targeting in response to oxidative stress and further degradation which increases its location to early endosome and the APP cleavage. The polypeptide is Beta-1,4-mannosyl-glycoprotein 4-beta-N-acetylglucosaminyltransferase (Mus musculus (Mouse)).